The primary structure comprises 209 residues: Thymidine kinase (209 aa).

ATP-binding positions include 25-32 (GCMFAGKT) and 103-106 (DEVQ). Glu-104 functions as the Proton acceptor in the catalytic mechanism. Cys-160, Cys-163, Cys-198, and Cys-201 together coordinate Zn(2+).

Belongs to the thymidine kinase family. As to quaternary structure, homotetramer.

It is found in the cytoplasm. It catalyses the reaction thymidine + ATP = dTMP + ADP + H(+). The sequence is that of Thymidine kinase from Mycoplasma capricolum subsp. capricolum (strain California kid / ATCC 27343 / NCTC 10154).